Here is a 749-residue protein sequence, read N- to C-terminus: MGYIESSTFRLYAEVIVGSNINKVLDYGVPENLEHITKGTAVTISLRGGKKVGVIYQIKTTTQCKKILPILGLSDSEIVLPQDLLDLLFWISQYYFAPLGKTLKLFLPAISSNVIQPKQHYRVVLKQSKAKTKEILAKLEVLHPSQGAVLKILLQHASPPGLSSLMETAKVSQSPIHSLEKLGILDIVDAAQLELQEDLLTFFPPAPKDLHPEQQSAIDKIFSSLKTSQFHTHLLFGITGSGKTEIYLRATSEALKQGKSTILLVPEIALTVQTVSLFKARFGKDVGVLHHKLSDSDKSRTWRQASEGSLRILIGPRSALFCPMKNLGLIIVDEEHDPAYKQTESPPCYHARDVAVMRGKLAHATVVLGSATPSLESYTNALSGKYVLSRLSSRAAAAHPAKISLINMNLEREKSKTKILFSQPVLKKIAERLEVGEQVLIFFNRRGYHTNVSCTVCKHTLKCPHCDMVLTFHKYANVLLCHLCNSSPKDLPQSCPKCLGTMTLQYRGSGTEKIEKILQQIFPQIRTIRIDSDTTKFKGSHETLLRQFATGKADVLIGTQMIAKGMNFSAVTLAVILNGDSGLYIPDFRASEQVFQLITQVAGRSGRSHLPGEILIQSFLPDHPTIHSAMRQDYSAFYSQEITGRELCEYPPFIRLIRCIFMGKCPKQTWEEAHRVHNILKEQLESTNPLMPVTPCGHFKIKDTFRYQFLIKSAYVIPVNKKLHHALMLAKLSPKVKFMIDVDPMTTFF.

The 168-residue stretch at 224–391 folds into the Helicase ATP-binding domain; the sequence is SLKTSQFHTH…LSGKYVLSRL (168 aa). ATP is bound at residue 237–244; the sequence is GITGSGKT. The DEAH box motif lies at 333 to 336; the sequence is DEEH. 8 residues coordinate Zn(2+): C454, C457, C463, C466, C481, C484, C495, and C498. One can recognise a Helicase C-terminal domain in the interval 490–658; the sequence is DLPQSCPKCL…EYPPFIRLIR (169 aa).

It belongs to the helicase family. PriA subfamily. In terms of assembly, component of the replication restart primosome. It depends on Zn(2+) as a cofactor.

It catalyses the reaction Couples ATP hydrolysis with the unwinding of duplex DNA by translocating in the 3'-5' direction.. It carries out the reaction ATP + H2O = ADP + phosphate + H(+). Initiates the restart of stalled replication forks, which reloads the replicative helicase on sites other than the origin of replication. Recognizes and binds to abandoned replication forks and remodels them to uncover a helicase loading site. Promotes assembly of the primosome at these replication forks. The polypeptide is Replication restart protein PriA (Chlamydia pneumoniae (Chlamydophila pneumoniae)).